Consider the following 570-residue polypeptide: Formate--tetrahydrofolate ligase (570 aa).

Residue 65 to 72 (TPHGEGKT) coordinates ATP.

This sequence belongs to the formate--tetrahydrofolate ligase family.

The catalysed reaction is (6S)-5,6,7,8-tetrahydrofolate + formate + ATP = (6R)-10-formyltetrahydrofolate + ADP + phosphate. The protein operates within one-carbon metabolism; tetrahydrofolate interconversion. This Shewanella sp. (strain ANA-3) protein is Formate--tetrahydrofolate ligase.